Here is a 337-residue protein sequence, read N- to C-terminus: Pyridoxal 5'-phosphate synthase subunit PdxS (337 aa).

Residue Asp-63 participates in D-ribose 5-phosphate binding. The active-site Schiff-base intermediate with D-ribose 5-phosphate is the Lys-120. Gly-192 provides a ligand contact to D-ribose 5-phosphate. Residue Lys-204 coordinates D-glyceraldehyde 3-phosphate. D-ribose 5-phosphate contacts are provided by residues Gly-253 and Gly-274–Ser-275.

The protein belongs to the PdxS/SNZ family. In the presence of PdxT, forms a dodecamer of heterodimers.

It carries out the reaction aldehydo-D-ribose 5-phosphate + D-glyceraldehyde 3-phosphate + L-glutamine = pyridoxal 5'-phosphate + L-glutamate + phosphate + 3 H2O + H(+). The protein operates within cofactor biosynthesis; pyridoxal 5'-phosphate biosynthesis. Functionally, catalyzes the formation of pyridoxal 5'-phosphate from ribose 5-phosphate (RBP), glyceraldehyde 3-phosphate (G3P) and ammonia. The ammonia is provided by the PdxT subunit. Can also use ribulose 5-phosphate and dihydroxyacetone phosphate as substrates, resulting from enzyme-catalyzed isomerization of RBP and G3P, respectively. In Aeropyrum pernix (strain ATCC 700893 / DSM 11879 / JCM 9820 / NBRC 100138 / K1), this protein is Pyridoxal 5'-phosphate synthase subunit PdxS.